We begin with the raw amino-acid sequence, 640 residues long: 2-hydroxyacyl-CoA lyase 2 (640 aa).

Residues 2-22 (VLFLIIAAIIIGLLLWKWLDV) traverse the membrane as a helical segment. E102 provides a ligand contact to thiamine diphosphate. The tract at residues 477–557 (DFVGSAAYIV…VIGIVGNDAC (81 aa)) is thiamine pyrophosphate binding. D528 and N554 together coordinate Mg(2+).

The protein belongs to the TPP enzyme family. It depends on Mg(2+) as a cofactor. Thiamine diphosphate is required as a cofactor.

It localises to the endoplasmic reticulum membrane. The catalysed reaction is 2-hydroxyoctadecanoyl-CoA = heptadecanal + formyl-CoA. The enzyme catalyses (2R)-hydroxyhexadecanoyl-CoA = pentadecanal + formyl-CoA. Its function is as follows. Endoplasmic reticulum 2-OH acyl-CoA lyase involved in the cleavage (C1 removal) reaction in the fatty acid alpha-oxydation in a thiamine pyrophosphate (TPP)-dependent manner. The chain is 2-hydroxyacyl-CoA lyase 2 from Caenorhabditis elegans.